The sequence spans 459 residues: ATP synthase subunit beta (459 aa).

Position 148–155 (148–155 (GGAGVGKT)) interacts with ATP.

The protein belongs to the ATPase alpha/beta chains family. In terms of assembly, F-type ATPases have 2 components, CF(1) - the catalytic core - and CF(0) - the membrane proton channel. CF(1) has five subunits: alpha(3), beta(3), gamma(1), delta(1), epsilon(1). CF(0) has three main subunits: a(1), b(2) and c(9-12). The alpha and beta chains form an alternating ring which encloses part of the gamma chain. CF(1) is attached to CF(0) by a central stalk formed by the gamma and epsilon chains, while a peripheral stalk is formed by the delta and b chains.

Its subcellular location is the cell inner membrane. It carries out the reaction ATP + H2O + 4 H(+)(in) = ADP + phosphate + 5 H(+)(out). Produces ATP from ADP in the presence of a proton gradient across the membrane. The catalytic sites are hosted primarily by the beta subunits. The polypeptide is ATP synthase subunit beta (Burkholderia mallei (strain NCTC 10229)).